A 204-amino-acid chain; its full sequence is Probable chorismate pyruvate-lyase (204 aa).

3 residues coordinate substrate: arginine 75, leucine 113, and glutamate 160.

It belongs to the UbiC family.

The protein localises to the cytoplasm. The enzyme catalyses chorismate = 4-hydroxybenzoate + pyruvate. Its pathway is cofactor biosynthesis; ubiquinone biosynthesis. Its function is as follows. Removes the pyruvyl group from chorismate, with concomitant aromatization of the ring, to provide 4-hydroxybenzoate (4HB) for the ubiquinone pathway. This chain is Probable chorismate pyruvate-lyase, found in Alcanivorax borkumensis (strain ATCC 700651 / DSM 11573 / NCIMB 13689 / SK2).